Reading from the N-terminus, the 176-residue chain is Inner membrane-spanning protein YciB (176 aa).

6 helical membrane passes run 3-23 (FLFD…WGIF), 24-44 (TATA…AFRH), 49-69 (TMLW…LVLH), 72-92 (KFIQ…LLAA), 121-141 (LAWA…VHNF), and 149-169 (FKLF…SLWL).

The protein belongs to the YciB family.

The protein resides in the cell inner membrane. Functionally, plays a role in cell envelope biogenesis, maintenance of cell envelope integrity and membrane homeostasis. This Burkholderia cenocepacia (strain ATCC BAA-245 / DSM 16553 / LMG 16656 / NCTC 13227 / J2315 / CF5610) (Burkholderia cepacia (strain J2315)) protein is Inner membrane-spanning protein YciB.